The primary structure comprises 243 residues: Orotidine 5'-phosphate decarboxylase (243 aa).

Substrate is bound by residues Asp19, Lys41, 69-78, Thr124, Arg185, Gln194, Gly214, and Arg215; that span reads DLKFFDIPAT. The active-site Proton donor is Lys71.

The protein belongs to the OMP decarboxylase family. Type 1 subfamily. Homodimer.

The enzyme catalyses orotidine 5'-phosphate + H(+) = UMP + CO2. It participates in pyrimidine metabolism; UMP biosynthesis via de novo pathway; UMP from orotate: step 2/2. Its function is as follows. Catalyzes the decarboxylation of orotidine 5'-monophosphate (OMP) to uridine 5'-monophosphate (UMP). This is Orotidine 5'-phosphate decarboxylase from Xanthomonas axonopodis pv. citri (strain 306).